A 463-amino-acid polypeptide reads, in one-letter code: V-type proton ATPase subunit S1 (463 aa).

Positions 1 to 32 are cleaved as a signal peptide; the sequence is MMAATVVSRIRTGTRWAPVLWLLLSLVAVAAA. Residues 33–225 constitute a propeptide that is removed on maturation; that stretch reads VAAEQQVPLV…TAVRPSRVAR (193 aa). Over 33 to 412 the chain is Lumenal; the sequence is VAAEQQVPLV…EQFSYASDCA (380 aa). 8 N-linked (GlcNAc...) asparagine glycosylation sites follow: Asn164, Asn255, Asn267, Asn290, Asn297, Asn344, Asn351, and Asn399. Residues 413–433 traverse the membrane as a helical segment; sequence GFFSPGIWMGLLTTLFMLFIF. The Cytoplasmic segment spans residues 434 to 463; it reads TYGLHMILSLKTMDRFDDRKGPTITLTQIV.

This sequence belongs to the vacuolar ATPase subunit S1 family. Accessory component of the multisubunit proton-transporting vacuolar (V)-ATPase protein pump. Interacts (via N-terminus) with ATP6AP2 (via N-terminus). Interacts with RNASEK. Interacts with TMEM106B (via C-terminus). Post-translationally, N-glycosylated. Expressed in brain (at protein level).

Its subcellular location is the endoplasmic reticulum membrane. It localises to the endoplasmic reticulum-Golgi intermediate compartment membrane. It is found in the cytoplasmic vesicle. The protein localises to the secretory vesicle. The protein resides in the synaptic vesicle membrane. Its subcellular location is the clathrin-coated vesicle membrane. Its function is as follows. Accessory subunit of the proton-transporting vacuolar (V)-ATPase protein pump, which is required for luminal acidification of secretory vesicles. Guides the V-type ATPase into specialized subcellular compartments, such as neuroendocrine regulated secretory vesicles or the ruffled border of the osteoclast, thereby regulating its activity. Involved in membrane trafficking and Ca(2+)-dependent membrane fusion. May play a role in the assembly of the V-type ATPase complex. In aerobic conditions, involved in intracellular iron homeostasis, thus triggering the activity of Fe(2+) prolyl hydroxylase (PHD) enzymes, and leading to HIF1A hydroxylation and subsequent proteasomal degradation. In islets of Langerhans cells, may regulate the acidification of dense-core secretory granules. The chain is V-type proton ATPase subunit S1 (Atp6ap1) from Rattus norvegicus (Rat).